Here is a 244-residue protein sequence, read N- to C-terminus: tRNA pseudouridine synthase A (244 aa).

Aspartate 52 functions as the Nucleophile in the catalytic mechanism. Substrate is bound at residue tyrosine 110.

The protein belongs to the tRNA pseudouridine synthase TruA family. Homodimer.

The catalysed reaction is uridine(38/39/40) in tRNA = pseudouridine(38/39/40) in tRNA. Its function is as follows. Formation of pseudouridine at positions 38, 39 and 40 in the anticodon stem and loop of transfer RNAs. The polypeptide is tRNA pseudouridine synthase A (Clostridium botulinum (strain Alaska E43 / Type E3)).